A 489-amino-acid chain; its full sequence is Penton protein (489 aa).

It belongs to the adenoviridae penton family. In terms of assembly, interacts with the fiber protein (via N-terminal tail region). Interacts with the capsid vertex protein; this interaction binds the penton base to neighboring peripentonal hexons.

The protein resides in the virion. It localises to the host nucleus. Functionally, major capsid protein that self-associates to form penton base pentamers, each in the shape of a pentagon, situated at the 12 vertices of the pseudo T=25 capsid. Involved in virus secondary attachment to host cell after initial attachment by the fiber protein, and in endocytosis of virions. As the virus enters the host cell, penton proteins are shed concomitant with virion acidification in the endosome. The protein is Penton protein of Murine adenovirus A serotype 1 (MAdV-1).